Reading from the N-terminus, the 475-residue chain is F-box protein At3g59150 (475 aa).

The F-box domain maps to 12 to 58 (GDVISNLPNDLLCRILSYLSTKEAALTSILSKRWSNLLLSIPILDFD).

This chain is F-box protein At3g59150, found in Arabidopsis thaliana (Mouse-ear cress).